Here is a 301-residue protein sequence, read N- to C-terminus: MVRTDRDRWDLATSVGATATMVAAQRALAADPQYALIDDPYAAPLVRAVDIDVYTRLVNGQIPVDVESGFDPARMPEAMACRTRFYDQFFVDATRSGISQVVILASGLDARAYRLGWPAGTVVHEVDMPQVIEFKTLTLADLGAKPTAERRTVAVDLRDDWAAVLQAAGFDKDVPSAWSAEGLLVYLPDDAQGALFDNVTALSATGSRLAFEFVPDTAVFNDERWRSHHARMSELGFEIDFNDLVYHGQRSHVIDHLARDGWQSASHTAKELHAANGLDYPDDDIAAVFADITYTSAVLGR.

S-adenosyl-L-methionine is bound by residues Asp-127 and 156 to 157 (DL).

This sequence belongs to the UPF0677 family.

Functionally, exhibits S-adenosyl-L-methionine-dependent methyltransferase activity. The polypeptide is Putative S-adenosyl-L-methionine-dependent methyltransferase MUL_0450 (Mycobacterium ulcerans (strain Agy99)).